The primary structure comprises 416 residues: Peroxisomal isocitrate dehydrogenase [NADP] (416 aa).

NADP(+) contacts are provided by residues 77–79 (TIT) and R84. Substrate is bound at residue T79. Residues 96-102 (SPNGTIR), R111, and R134 contribute to the substrate site. A Mn(2+)-binding site is contributed by D253. Position 261 (K261) interacts with NADP(+). A Mn(2+)-binding site is contributed by D276. Residues 311–316 (GTVTRH) and N329 contribute to the NADP(+) site. Residues 414–416 (SRL) carry the Peroxisomal targeting signal motif.

This sequence belongs to the isocitrate and isopropylmalate dehydrogenases family. It depends on Mg(2+) as a cofactor. Requires Mn(2+) as cofactor.

It localises to the peroxisome. The catalysed reaction is D-threo-isocitrate + NADP(+) = 2-oxoglutarate + CO2 + NADPH. Functionally, may be involved in response to oxidative stresses. This chain is Peroxisomal isocitrate dehydrogenase [NADP] (ICDH), found in Arabidopsis thaliana (Mouse-ear cress).